The primary structure comprises 329 residues: Glycerol-3-phosphate dehydrogenase [NAD(P)+] (329 aa).

Residues S10, W11, R31, and K105 each contribute to the NADPH site. 3 residues coordinate sn-glycerol 3-phosphate: K105, G134, and S136. NADPH is bound at residue A138. Residues K189, D242, S252, R253, and N254 each coordinate sn-glycerol 3-phosphate. Residue K189 is the Proton acceptor of the active site. R253 is an NADPH binding site. NADPH contacts are provided by V277 and E279.

The protein belongs to the NAD-dependent glycerol-3-phosphate dehydrogenase family.

The protein localises to the cytoplasm. The enzyme catalyses sn-glycerol 3-phosphate + NAD(+) = dihydroxyacetone phosphate + NADH + H(+). It carries out the reaction sn-glycerol 3-phosphate + NADP(+) = dihydroxyacetone phosphate + NADPH + H(+). Its pathway is membrane lipid metabolism; glycerophospholipid metabolism. In terms of biological role, catalyzes the reduction of the glycolytic intermediate dihydroxyacetone phosphate (DHAP) to sn-glycerol 3-phosphate (G3P), the key precursor for phospholipid synthesis. This is Glycerol-3-phosphate dehydrogenase [NAD(P)+] from Neisseria meningitidis serogroup C (strain 053442).